The primary structure comprises 185 residues: MSVLSDKSIRKLAVEQSMISPFIDKQVRDGKISYGLSSFGYDARVGDEFKIFHNVNSSIVDPKEFSSDNFVTKKSSDYIIIPPNSFALGTTIEVFKIPRDIMCIVVGKSTYARTGIIVNVTPIESEFFGTVTLEFSNTTPLPAKIYANEGVAQFLFLKGDQSPETSYADRKGKYMGQTGVTLPKV.

DCTP contacts are provided by residues 108-113 (KSTYAR), 132-134 (TLE), Q153, Y167, and Q177. Catalysis depends on E134, which acts as the Proton donor/acceptor.

The protein belongs to the dCTP deaminase family. As to quaternary structure, homotrimer.

It catalyses the reaction dCTP + H2O + H(+) = dUTP + NH4(+). Its pathway is pyrimidine metabolism; dUMP biosynthesis; dUMP from dCTP (dUTP route): step 1/2. Functionally, catalyzes the deamination of dCTP to dUTP. The protein is dCTP deaminase of Pelagibacter ubique (strain HTCC1062).